Reading from the N-terminus, the 650-residue chain is PTS system mannose-specific EIIBCA component (650 aa).

Residues 1–98 (MKLLAITSCP…PEELIQKALN (98 aa)) form the PTS EIIB type-2 domain. Cys9 acts as the Phosphocysteine intermediate; for EIIB activity in catalysis. One can recognise a PTS EIIC type-2 domain in the interval 123–456 (IYRHLMNGVS…SLVTALFVNV (334 aa)). A run of 7 helical transmembrane segments spans residues 133-153 (FMVP…TLGG), 174-194 (IGSA…AYSI), 199-219 (GLVP…YDSA), 221-241 (GAGF…ALWI), 256-276 (IIII…FLIG), 297-317 (SSIL…GGPV), and 336-356 (IMGP…IATF). At Ser365 the chain carries Phosphoserine. The next 3 membrane-spanning stretches (helical) occupy residues 369–389 (MGKA…IPFA), 396–416 (VIPS…IGNV), and 436–456 (VLMF…FVNV). One can recognise a PTS EIIA type-2 domain in the interval 504–649 (DIISPELIEP…EEAYKLLEEI (146 aa)). His566 serves as the catalytic Tele-phosphohistidine intermediate; for EIIA activity.

Its subcellular location is the cell membrane. It carries out the reaction D-mannose(out) + N(pros)-phospho-L-histidyl-[protein] = D-mannose 6-phosphate(in) + L-histidyl-[protein]. Its function is as follows. The phosphoenolpyruvate-dependent sugar phosphotransferase system (sugar PTS), a major carbohydrate active -transport system, catalyzes the phosphorylation of incoming sugar substrates concomitantly with their translocation across the cell membrane. This system is involved in mannose transport. In Bacillus subtilis (strain 168), this protein is PTS system mannose-specific EIIBCA component (manP).